The following is a 398-amino-acid chain: 1-aminocyclopropane-1-carboxylate oxidase homolog 5 (398 aa).

The region spanning 247–347 (KSHIMFGQYY…RISMPCFVST (101 aa)) is the Fe2OG dioxygenase domain. Residues His-271, Asp-273, and His-327 each contribute to the Fe cation site. Residue Arg-338 participates in 2-oxoglutarate binding.

Belongs to the iron/ascorbate-dependent oxidoreductase family. Requires Fe(2+) as cofactor. In terms of tissue distribution, expressed in etiolated seedlings, leaves, stems and flowers.

This Arabidopsis thaliana (Mouse-ear cress) protein is 1-aminocyclopropane-1-carboxylate oxidase homolog 5 (2A6).